Reading from the N-terminus, the 101-residue chain is DNA-binding protein Fis (101 aa).

The H-T-H motif DNA-binding region spans glutamine 77–lysine 96.

This sequence belongs to the transcriptional regulatory Fis family. Homodimer.

Activates ribosomal RNA transcription. Plays a direct role in upstream activation of rRNA promoters. This Shewanella frigidimarina (strain NCIMB 400) protein is DNA-binding protein Fis.